Here is a 337-residue protein sequence, read N- to C-terminus: Basic membrane protein A1 (337 aa).

The first 17 residues, Met1–Ser17, serve as a signal peptide directing secretion. The N-palmitoyl cysteine moiety is linked to residue Cys18. Cys18 is lipidated: S-diacylglycerol cysteine.

It belongs to the BMP lipoprotein family. In terms of assembly, monomer.

It is found in the cell inner membrane. In terms of biological role, immunogenic protein. May be part of an ABC-type nucleoside uptake system involved in the purine salvage pathway. This chain is Basic membrane protein A1 (bmpA1), found in Borrelia garinii subsp. bavariensis (strain ATCC BAA-2496 / DSM 23469 / PBi) (Borreliella bavariensis).